The chain runs to 58 residues: Potassium channel toxin alpha-KTx BmKcug1a (58 aa).

The first 21 residues, 1 to 21 (MKISFLLLLAIVICSIGWTEA), serve as a signal peptide directing secretion. A Pyrrolidone carboxylic acid modification is found at Gln-22. 3 disulfides stabilise this stretch: Cys-28/Cys-49, Cys-34/Cys-54, and Cys-38/Cys-56.

This sequence belongs to the short scorpion toxin superfamily. Potassium channel inhibitor family. Alpha-KTx 01 subfamily. As to expression, expressed by the venom gland.

Its subcellular location is the secreted. In terms of biological role, potent blocker of both large-conductance calcium-activated potassium channels (KCa1.1/KCNMA1) and voltage-gated potassium channels (Kv1.3/KCNA3 and ERG1/Kv11.1/KCNH2). The sequence is that of Potassium channel toxin alpha-KTx BmKcug1a from Olivierus martensii (Manchurian scorpion).